We begin with the raw amino-acid sequence, 338 residues long: Fructose-1,6-bisphosphatase class 1 (338 aa).

Positions 91, 113, 115, and 116 each coordinate Mg(2+). Substrate-binding positions include 116 to 119 (DGSS), Asn211, Tyr244, and Lys277. Glu283 is a Mg(2+) binding site.

The protein belongs to the FBPase class 1 family. As to quaternary structure, homotetramer. Mg(2+) serves as cofactor.

The protein resides in the cytoplasm. The enzyme catalyses beta-D-fructose 1,6-bisphosphate + H2O = beta-D-fructose 6-phosphate + phosphate. The protein operates within carbohydrate biosynthesis; gluconeogenesis. This chain is Fructose-1,6-bisphosphatase class 1, found in Oleidesulfovibrio alaskensis (strain ATCC BAA-1058 / DSM 17464 / G20) (Desulfovibrio alaskensis).